The primary structure comprises 252 residues: Streptothricin hydrolase (252 aa).

Cysteine 158 serves as the catalytic Nucleophile. The segment covering 230-242 has biased composition (low complexity); sequence AVGPAAAPGLPVS. The segment at 230-252 is disordered; that stretch reads AVGPAAAPGLPVSPAAPPPSPVR. Residues 243 to 252 show a composition bias toward pro residues; sequence PAAPPPSPVR.

Belongs to the isochorismatase family.

The enzyme catalyses streptothricin F + H2O = streptothricin F acid. Catalyzes the hydrolysis of the amide bond of streptolidine lactam, thereby conferring streptothricin (ST) resistance. Can hydrolyze streptothricin-F and streptothricin-D. However, this strain is believed to be a ST nonproducer, which raises the possibility that its true role may not be its involvement in self-resistance to STs. May catalyze the hydrolysis of naturally occurring cyclic amide compounds that are structurally related to STs. This is Streptothricin hydrolase (sttH) from Streptomyces noursei (Streptomyces albulus).